We begin with the raw amino-acid sequence, 65 residues long: UPF0434 protein VFMJ11_A0475 (65 aa).

It belongs to the UPF0434 family.

This is UPF0434 protein VFMJ11_A0475 from Aliivibrio fischeri (strain MJ11) (Vibrio fischeri).